The following is a 496-amino-acid chain: MHAKSLTELRAALDAKECSAVELAQHYLKRIDAARDLNAFVHVDAELTLAQAKAADAALANGEAGPLAGLPIVHKDVFVTRGWRSTAGSKMLANYASPFDATVVARLSAAGMVTLGKTNMDEFAMGSSNENSAFGPVKNPWDTSAVPGGSSGGSSAAVAARLAPAATGTDTGGSIRQPASFAGVTGIKPTYGRVSRYGMIAFASSLDQGGPMARSAADCALLLNAMAGFDERDSTSLERADEDYTRHLGKAWAAGGDAGKPLAGLRIGLPAEYFGAGLADDVRAAIDAALKTYEALGATLVPVSLPKTELSIPVYYVIAPAEASSNLSRFDGVRYGHRAAEYRDLLDMYKKSRAEGFGPEVKRRILVGTYVLSHGYYDAYYLQAQKIRRIIAQDFQEAFKSCDVIMGPASPTVAWDIGAKGDDPVQMYLADIYTLSVSLAGLPGMSVPCGFGAGANAKRPVGLQIIGNYFDEARMLQVADAFQRATDWHVQEPAGV.

Active-site charge relay system residues include K75 and S150. Residue S174 is the Acyl-ester intermediate of the active site.

The protein belongs to the amidase family. GatA subfamily. As to quaternary structure, heterotrimer of A, B and C subunits.

It catalyses the reaction L-glutamyl-tRNA(Gln) + L-glutamine + ATP + H2O = L-glutaminyl-tRNA(Gln) + L-glutamate + ADP + phosphate + H(+). In terms of biological role, allows the formation of correctly charged Gln-tRNA(Gln) through the transamidation of misacylated Glu-tRNA(Gln) in organisms which lack glutaminyl-tRNA synthetase. The reaction takes place in the presence of glutamine and ATP through an activated gamma-phospho-Glu-tRNA(Gln). The polypeptide is Glutamyl-tRNA(Gln) amidotransferase subunit A (Burkholderia mallei (strain NCTC 10247)).